Reading from the N-terminus, the 105-residue chain is Large ribosomal subunit protein uL24 (105 aa).

It belongs to the universal ribosomal protein uL24 family. Part of the 50S ribosomal subunit.

One of two assembly initiator proteins, it binds directly to the 5'-end of the 23S rRNA, where it nucleates assembly of the 50S subunit. Its function is as follows. One of the proteins that surrounds the polypeptide exit tunnel on the outside of the subunit. In Aeromonas hydrophila subsp. hydrophila (strain ATCC 7966 / DSM 30187 / BCRC 13018 / CCUG 14551 / JCM 1027 / KCTC 2358 / NCIMB 9240 / NCTC 8049), this protein is Large ribosomal subunit protein uL24.